Here is a 212-residue protein sequence, read N- to C-terminus: Cytidylate kinase (212 aa).

7–15 is an ATP binding site; it reads GPAASGKGT.

The protein belongs to the cytidylate kinase family. Type 1 subfamily.

It localises to the cytoplasm. It carries out the reaction CMP + ATP = CDP + ADP. The catalysed reaction is dCMP + ATP = dCDP + ADP. In Rhodopseudomonas palustris (strain ATCC BAA-98 / CGA009), this protein is Cytidylate kinase.